Reading from the N-terminus, the 1137-residue chain is Eukaryotic translation initiation factor 3 subunit A (1137 aa).

The PCI domain occupies 319–501 (LQRMAAHVLL…NSIYFGTDLT (183 aa)). Composition is skewed to basic and acidic residues over residues 588–623 (QNNAREEEEARRQEEESRKAKLAEQKRLEQEQEERE) and 829–899 (AAEE…RGGD). Disordered stretches follow at residues 588–631 (QNNA…QNEI) and 829–1137 (AAEE…VKRR). Position 908 is a phosphoserine (Ser908). Composition is skewed to basic and acidic residues over residues 922 to 971 (RGIE…EPDS), 985 to 1046 (SRDE…EPQR), 1054 to 1083 (DAPRHADRENRRTAGGERRDRDVRETRGDQ), and 1106 to 1127 (AREEKPATKRDQPQEKENKAAD).

This sequence belongs to the eIF-3 subunit A family. Component of the eukaryotic translation initiation factor 3 (eIF-3) complex. The eIF-3 complex interacts with pix.

The protein localises to the cytoplasm. Its function is as follows. RNA-binding component of the eukaryotic translation initiation factor 3 (eIF-3) complex, which is involved in protein synthesis of a specialized repertoire of mRNAs and, together with other initiation factors, stimulates binding of mRNA and methionyl-tRNAi to the 40S ribosome. The eIF-3 complex specifically targets and initiates translation of a subset of mRNAs involved in cell proliferation. This chain is Eukaryotic translation initiation factor 3 subunit A, found in Drosophila yakuba (Fruit fly).